A 654-amino-acid chain; its full sequence is Phosphate transport system permease protein PstA homolog (654 aa).

Transmembrane regions (helical) follow at residues 22-42 (LAFLFLVLFISFFVFLLTEAT), 64-84 (AGIWFPLLVSFIVSIGALIIA), 113-133 (ILSGIPSVIFGLFASQILSIF), 143-163 (LSLLNVIAMLSFMIIPIVISL), 266-286 (VLYIFGIIILILVSLLNFFAI), 303-323 (ISNFIYQVVWFIPNNISALFV), 368-388 (ELICTFLAFGFVLAILLFVFI), 417-437 (LVIILITITITFPLALLIAIW), 453-473 (FVIDSLSSMPSIIYGLFGLSF), 486-506 (NGTSLIAGILTISVVILLFLI), 535-555 (IFKIVLPSALKGLIVALILSI), and 613-633 (VVFLILLIFFSSYLIPSLFLL). Positions 70–285 (LLVSFIVSIG…ILVSLLNFFA (216 aa)) constitute an ABC transmembrane type-1 1 domain. An ABC transmembrane type-1 2 domain is found at 413–623 (LVNTLVIILI…VFLILLIFFS (211 aa)).

The protein belongs to the binding-protein-dependent transport system permease family. CysTW subfamily.

It localises to the cell membrane. In terms of biological role, could be part of a binding-protein-dependent transport system for phosphate; probably responsible for the translocation of the substrate across the membrane. The sequence is that of Phosphate transport system permease protein PstA homolog (pstA) from Mycoplasma genitalium (strain ATCC 33530 / DSM 19775 / NCTC 10195 / G37) (Mycoplasmoides genitalium).